A 549-amino-acid chain; its full sequence is Glucose-6-phosphate isomerase (549 aa).

Glutamate 355 acts as the Proton donor in catalysis. Catalysis depends on residues histidine 386 and lysine 514.

This sequence belongs to the GPI family.

The protein localises to the cytoplasm. The enzyme catalyses alpha-D-glucose 6-phosphate = beta-D-fructose 6-phosphate. It participates in carbohydrate biosynthesis; gluconeogenesis. It functions in the pathway carbohydrate degradation; glycolysis; D-glyceraldehyde 3-phosphate and glycerone phosphate from D-glucose: step 2/4. In terms of biological role, catalyzes the reversible isomerization of glucose-6-phosphate to fructose-6-phosphate. The protein is Glucose-6-phosphate isomerase of Salmonella paratyphi B (strain ATCC BAA-1250 / SPB7).